The sequence spans 355 residues: Putative inositol monophosphatase 3 (355 aa).

Residues 16 to 36 (VPATIFAILLTIVLVYFLNFH) traverse the membrane as a helical segment. Mg(2+) is bound by residues Glu127, Asp167, Leu169, Asp170, and Asp292. Glu127 lines the substrate pocket. Residues 169–172 (LDAT) and Asp292 contribute to the substrate site.

It belongs to the inositol monophosphatase superfamily. It depends on Mg(2+) as a cofactor.

The protein localises to the membrane. The enzyme catalyses a myo-inositol phosphate + H2O = myo-inositol + phosphate. The protein operates within polyol metabolism; myo-inositol biosynthesis; myo-inositol from D-glucose 6-phosphate: step 2/2. The protein is Putative inositol monophosphatase 3 of Drosophila pseudoobscura pseudoobscura (Fruit fly).